A 337-amino-acid polypeptide reads, in one-letter code: ATP-dependent 6-phosphofructokinase (337 aa).

Gly-11 is a binding site for ATP. 21–25 (RAVVR) serves as a coordination point for ADP. Residues 72–73 (RY) and 102–105 (GDGS) contribute to the ATP site. Position 103 (Asp-103) interacts with Mg(2+). 125–127 (TID) contributes to the substrate binding site. Asp-127 (proton acceptor) is an active-site residue. Arg-154 contributes to the ADP binding site. Residues Arg-162 and 169 to 171 (MGR) each bind substrate. Residues 185–187 (GAD), Lys-212, and 214–216 (KNH) contribute to the ADP site. Substrate is bound by residues Glu-223, Arg-245, and 251–254 (HILR).

Belongs to the phosphofructokinase type A (PFKA) family. ATP-dependent PFK group I subfamily. Prokaryotic clade 'B1' sub-subfamily. In terms of assembly, homotetramer. Requires Mg(2+) as cofactor.

Its subcellular location is the cytoplasm. The catalysed reaction is beta-D-fructose 6-phosphate + ATP = beta-D-fructose 1,6-bisphosphate + ADP + H(+). The protein operates within carbohydrate degradation; glycolysis; D-glyceraldehyde 3-phosphate and glycerone phosphate from D-glucose: step 3/4. Allosterically activated by ADP and other diphosphonucleosides, and allosterically inhibited by phosphoenolpyruvate. Functionally, catalyzes the phosphorylation of D-fructose 6-phosphate to fructose 1,6-bisphosphate by ATP, the first committing step of glycolysis. In Streptococcus pyogenes serotype M4 (strain MGAS10750), this protein is ATP-dependent 6-phosphofructokinase.